The primary structure comprises 228 residues: Cytidylate kinase (228 aa).

An ATP-binding site is contributed by 10–18 (GPSGSGKGT).

The protein belongs to the cytidylate kinase family. Type 1 subfamily.

Its subcellular location is the cytoplasm. It catalyses the reaction CMP + ATP = CDP + ADP. The enzyme catalyses dCMP + ATP = dCDP + ADP. This Acinetobacter baumannii (strain SDF) protein is Cytidylate kinase.